Here is a 357-residue protein sequence, read N- to C-terminus: Glycerol-3-phosphate dehydrogenase [NAD(P)+] (357 aa).

4 residues coordinate NADPH: Ser30, Phe31, Arg51, and Lys124. Sn-glycerol 3-phosphate-binding residues include Lys124 and Gly152. An NADPH-binding site is contributed by Ala156. Residues Lys207, Asp260, Ser270, Arg271, and Asn272 each coordinate sn-glycerol 3-phosphate. The Proton acceptor role is filled by Lys207. Arg271 is a binding site for NADPH. Glu297 provides a ligand contact to NADPH.

The protein belongs to the NAD-dependent glycerol-3-phosphate dehydrogenase family.

The protein localises to the cytoplasm. It catalyses the reaction sn-glycerol 3-phosphate + NAD(+) = dihydroxyacetone phosphate + NADH + H(+). The catalysed reaction is sn-glycerol 3-phosphate + NADP(+) = dihydroxyacetone phosphate + NADPH + H(+). The protein operates within membrane lipid metabolism; glycerophospholipid metabolism. Catalyzes the reduction of the glycolytic intermediate dihydroxyacetone phosphate (DHAP) to sn-glycerol 3-phosphate (G3P), the key precursor for phospholipid synthesis. This chain is Glycerol-3-phosphate dehydrogenase [NAD(P)+], found in Acinetobacter baumannii (strain SDF).